Consider the following 449-residue polypeptide: Elongation factor 1-alpha 1 (449 aa).

The tr-type G domain maps to 5–230 (KFHINIVVIG…DQINEPKRPS (226 aa)). Positions 14–21 (GHVDSGKS) are G1. 14–21 (GHVDSGKS) serves as a coordination point for GTP. The residue at position 55 (K55) is an N6,N6-dimethyllysine. Residues 70 to 74 (GITID) are G2. Residue K79 is modified to N6,N6,N6-trimethyllysine. Positions 91 to 94 (DAPG) are G3. Residues 91–95 (DAPGH) and 153–156 (NKMD) each bind GTP. Residues 153 to 156 (NKMD) form a G4 region. K187 carries the N6,N6,N6-trimethyllysine modification. A G5 region spans residues 194–196 (SGF). Position 261 is an N6-methyllysine (K261). K306 and K396 each carry N6,N6,N6-trimethyllysine. Glycyl lysine isopeptide (Lys-Gly) (interchain with G-Cter in ubiquitin) cross-links involve residues K438 and K441.

It belongs to the TRAFAC class translation factor GTPase superfamily. Classic translation factor GTPase family. EF-Tu/EF-1A subfamily.

Its subcellular location is the cytoplasm. Its function is as follows. This protein promotes the GTP-dependent binding of aminoacyl-tRNA to the A-site of ribosomes during protein biosynthesis. This is Elongation factor 1-alpha 1 (A1) from Arabidopsis thaliana (Mouse-ear cress).